The chain runs to 243 residues: High affinity immunoglobulin epsilon receptor subunit beta (243 aa).

The disordered stretch occupies residues 1–48; that stretch reads MDTENKSRADLALPNPQESPSAPDIELLEASPPAKALPEKPASPPPQQ. At 1–59 the chain is on the cytoplasmic side; that stretch reads MDTENKSRADLALPNPQESPSAPDIELLEASPPAKALPEKPASPPPQQTWQSFLKKELE. A helical membrane pass occupies residues 60–79; that stretch reads FLGVTQVLVGLICLCFGTVV. At 80 to 97 the chain is on the extracellular side; that stretch reads CSTLQTSDFDDEVLLLYR. The helical transmembrane segment at 98–117 threads the bilayer; the sequence is AGYPFWGAVLFVLSGFLSIM. Residues 118 to 130 are Cytoplasmic-facing; sequence SERKNTLYLVRGS. The helical transmembrane segment at 131 to 150 threads the bilayer; it reads LGANIVSSIAAGLGIAILIL. Residues 151–179 are Extracellular-facing; sequence NLSNNSAYMNYCKDITEDDGCFVTSFITE. Residues 180–199 traverse the membrane as a helical segment; that stretch reads LVLMLLFLTILAFCSAVLLI. The Cytoplasmic portion of the chain corresponds to 200 to 243; sequence IYRIGQEFERSKVPDDRLYEELHVYSPIYSALEDTREASAPVVS. 2 positions are modified to phosphotyrosine: Tyr-218 and Tyr-224. A Phosphoserine modification is found at Ser-225. Tyr-228 carries the phosphotyrosine modification.

Belongs to the MS4A family. As to quaternary structure, tetramer of an alpha chain, a beta chain, and two disulfide linked gamma chains. Binds LILRB1. Interacts with FES/FPS and LYN. Interacts with FGR. Phosphorylated on tyrosine residues by LYN.

It is found in the membrane. Its function is as follows. High affinity receptor that binds to the Fc region of immunoglobulins epsilon. Aggregation of FCER1 by multivalent antigens is required for the full mast cell response, including the release of preformed mediators (such as histamine) by degranulation and de novo production of lipid mediators and cytokines. Also mediates the secretion of important lymphokines. Binding of allergen to receptor-bound IgE leads to cell activation and the release of mediators responsible for the manifestations of allergy. The chain is High affinity immunoglobulin epsilon receptor subunit beta (Ms4a2) from Rattus norvegicus (Rat).